Reading from the N-terminus, the 282-residue chain is Blarina toxin (282 aa).

An N-terminal signal peptide occupies residues methionine 1–alanine 17. A propeptide spans valine 18 to arginine 29 (activation peptide). The 250-residue stretch at isoleucine 30–lysine 279 folds into the Peptidase S1 domain. 5 disulfides stabilise this stretch: cysteine 36-cysteine 194, cysteine 57-cysteine 73, cysteine 170-cysteine 240, cysteine 205-cysteine 219, and cysteine 230-cysteine 255. The active-site Charge relay system is histidine 72. An O-linked (GalNAc...) serine glycan is attached at serine 100. N-linked (GlcNAc...) asparagine glycans are attached at residues asparagine 109 and asparagine 122. The active-site Charge relay system is aspartate 138. Residue serine 234 is the Charge relay system of the active site.

This sequence belongs to the peptidase S1 family. Kallikrein subfamily. As to expression, submaxillary and sublingual salivary glands.

It localises to the secreted. Its activity is regulated as follows. Strongly inhibited by aprotinin, moderately inhibited by secretory leukoprotease inhibitor, the Kunitz-type soybean trypsin inhibitor, and leupeptin, and not inhibited by urinary trypsin inhibitor or alpha-1 protease inhibitor. In terms of biological role, has kallikrein-like activity, converts kininogens to kinins, and has dilatory effects on the blood vessel walls. Shows highest activity toward Pro-Phe-Arg-MCA and Boc-Val-Leu-Lys-MCA in vitro. Has preference for Arg and Lys in position P1 and hydrophobic residues in position P2. The polypeptide is Blarina toxin (BTX) (Blarina brevicauda (Northern short-tailed shrew)).